The primary structure comprises 526 residues: Choline/ethanolamine transporter FLVCR2 (526 aa).

Positions methionine 1–serine 70 are disordered. At methionine 1 to serine 76 the chain is on the cytoplasmic side. Methionine 1–arginine 84 serves as a coordination point for heme b. A run of 5 repeats spans residues proline 25 to histidine 30, proline 31 to histidine 36, proline 37 to asparagine 42, proline 43 to histidine 48, and proline 49 to histidine 54. Positions proline 25–serine 56 are enriched in low complexity. Residues proline 25 to proline 72 form an 8 X 6 AA tandem repeats of P-S-[VS]-S-[VIAG]-[HNP] region. One copy of the 6; approximate repeat lies at proline 55–glutamine 60. One copy of the 7; approximate repeat lies at proline 61–histidine 66. Residues proline 67–proline 72 form repeat 8. The helical transmembrane segment at valine 77–glutamine 101 threads the bilayer. Choline contacts are provided by asparagine 98 and tryptophan 102. Residues tryptophan 102 to serine 119 lie on the Extracellular side of the membrane. The chain crosses the membrane as a helical span at residues alanine 120 to lysine 147. Over phenylalanine 148 to glycine 149 the chain is Cytoplasmic. A helical membrane pass occupies residues leucine 150 to leucine 169. Residues glycine 170–leucine 176 lie on the Extracellular side of the membrane. Residues phenylalanine 177 to tryptophan 205 form a helical membrane-spanning segment. Residues glutamine 191 and leucine 195 each contribute to the choline site. Over phenylalanine 206–glutamate 210 the chain is Cytoplasmic. Residues valine 211–leucine 236 traverse the membrane as a helical segment. The Extracellular segment spans residues valine 237–glutamate 241. The helical transmembrane segment at aspartate 242–valine 271 threads the bilayer. At phenylalanine 272–asparagine 307 the chain is on the cytoplasmic side. A helical transmembrane segment spans residues leucine 308 to histidine 338. Tyrosine 325 provides a ligand contact to choline. Residues tyrosine 339–glutamate 342 are Extracellular-facing. The helical transmembrane segment at glutamate 343–serine 371 threads the bilayer. The Cytoplasmic segment spans residues lysine 372–threonine 373. A helical transmembrane segment spans residues tyrosine 374 to leucine 396. Residues asparagine 397–glycine 399 are Extracellular-facing. A helical transmembrane segment spans residues histidine 400 to leucine 429. At threonine 430–isoleucine 437 the chain is on the cytoplasmic side. Residues serine 438–asparagine 463 traverse the membrane as a helical segment. Residue glutamine 447 participates in choline binding. Residues tyrosine 464–glycine 465 are Extracellular-facing. The chain crosses the membrane as a helical span at residues threonine 466 to lysine 488. The Cytoplasmic segment spans residues alanine 489–leucine 526. Positions threonine 500–leucine 526 are disordered. Serine 515 carries the phosphoserine modification.

Belongs to the major facilitator superfamily. Feline leukemia virus subgroup C receptor (TC 2.A.1.28.1) family. As to quaternary structure, interacts with components of electron transfer chain complexes III, IV and V including CYC1, NDUFA4, COX4I1, ATP5PD and ATP5F1C; these interactions occur in the absence of heme and are disrupted upon heme binding. Interacts with ATP2A2; this interaction occurs in the absence of heme and promotes ATP2A2 proteasomal degradation; the complex is dissociated upon heme binding. Interacts with HMOX1; this interaction is potentiated in the presence of heme. Expressed in non-hematopoietic tissues, with relative abundant expression in brain, placenta, lung, liver and kidney. Also expressed in hematopoietic tissues (fetal liver, spleen, lymph node, thymus, leukocytes and bone marrow). Found in acidophil cells of the pituitary that secrete growth hormone and prolactin (at protein level).

The protein localises to the cell membrane. It is found in the mitochondrion membrane. Its subcellular location is the endoplasmic reticulum membrane. The enzyme catalyses choline(out) = choline(in). It carries out the reaction ethanolamine(in) = ethanolamine(out). The catalysed reaction is heme b(in) = heme b(out). Its function is as follows. Choline uniporter that specifically mediates choline uptake at the blood-brain-barrier. Responsible for the majority of choline uptake across the blood-brain-barrier from the circulation into the brain. Choline, a nutrient critical for brain development, is a precursor of phosphatidylcholine, as well as betaine. Also mediates transport of ethanolamine. Choline and ethanolamine transport is not coupled with proton transport and is exclusively driven by the choline gradient across the plasma membrane. However, the presence of an inwardly directed proton gradient enhances choline uptake. Also acts as a heme b transporter. Required to regulate mitochondrial respiration processes, ATP synthesis and thermogenesis. At low heme levels, interacts with components of electron transfer chain (ETC) complexes and ATP2A2, leading to ubiquitin-mediated degradation of ATP2A2 and inhibition of thermogenesis. Upon heme binding, dissociates from ETC complexes to allow switching from mitochondrial ATP synthesis to thermogenesis. In Homo sapiens (Human), this protein is Choline/ethanolamine transporter FLVCR2.